The primary structure comprises 382 residues: D-galactonate dehydratase (382 aa).

Residue aspartate 183 coordinates Mg(2+). Histidine 185 (proton donor) is an active-site residue. The Mg(2+) site is built by glutamate 209 and glutamate 235. Histidine 285 acts as the Proton acceptor in catalysis.

It belongs to the mandelate racemase/muconate lactonizing enzyme family. GalD subfamily. The cofactor is Mg(2+).

It carries out the reaction D-galactonate = 2-dehydro-3-deoxy-D-galactonate + H2O. The protein operates within carbohydrate acid metabolism; D-galactonate degradation; D-glyceraldehyde 3-phosphate and pyruvate from D-galactonate: step 1/3. In terms of biological role, catalyzes the dehydration of D-galactonate to 2-keto-3-deoxy-D-galactonate. This is D-galactonate dehydratase from Escherichia coli (strain 55989 / EAEC).